A 678-amino-acid polypeptide reads, in one-letter code: Vacuolar protein sorting-associated protein 1 (678 aa).

Residues 24 to 311 form the Dynamin-type G domain; the sequence is LIDLPQITVV…LMHHIRNTLP (288 aa). The interval 34 to 41 is G1 motif; sequence RSQSSGKS. Position 34-41 (34-41) interacts with GTP; it reads RSQSSGKS. The segment at 60-62 is G2 motif; sequence VTR. Residues 71-96 are disordered; it reads NRPSASGKNEETTTDSDGKDQNNSSE. The segment covering 78–90 has biased composition (basic and acidic residues); the sequence is KNEETTTDSDGKD. The G3 motif stretch occupies residues 153–156; it reads DLPG. Residues 153-157 and 222-225 contribute to the GTP site; these read DLPGL and TKVD. The interval 222-225 is G4 motif; it reads TKVD. The tract at residues 252 to 255 is G5 motif; sequence INRG. The region spanning 592-678 is the GED domain; the sequence is TEVIKLLIMS…LQASEIVSNV (87 aa).

Belongs to the TRAFAC class dynamin-like GTPase superfamily. Dynamin/Fzo/YdjA family.

The sequence is that of Vacuolar protein sorting-associated protein 1 (vps1) from Schizosaccharomyces pombe (strain 972 / ATCC 24843) (Fission yeast).